The chain runs to 158 residues: MRCPYCQSEDTQVKDSRPAEDGAVIRRRRVCSVCGGRFTTFERVQLRDLMVVKKSGRRVPFDRDKLTRSIEVALRKRDVDNDRVERAISGIVRQLESSGEAEVTSDEIGRLAMDALKGIDDIAYIRFASVYRNFSKAVDFHNVIDELTVAETEDDLDA.

The interval 1-20 (MRCPYCQSEDTQVKDSRPAE) is disordered. The segment at 3–34 (CPYCQSEDTQVKDSRPAEDGAVIRRRRVCSVC) is a zinc-finger region. Residues 11-20 (TQVKDSRPAE) show a composition bias toward basic and acidic residues. The ATP-cone domain maps to 49-139 (LMVVKKSGRR…VYRNFSKAVD (91 aa)).

The protein belongs to the NrdR family. Zn(2+) is required as a cofactor.

Negatively regulates transcription of bacterial ribonucleotide reductase nrd genes and operons by binding to NrdR-boxes. The polypeptide is Transcriptional repressor NrdR (Brucella anthropi (strain ATCC 49188 / DSM 6882 / CCUG 24695 / JCM 21032 / LMG 3331 / NBRC 15819 / NCTC 12168 / Alc 37) (Ochrobactrum anthropi)).